Reading from the N-terminus, the 309-residue chain is Olfactory receptor 5H2 (309 aa).

Residues Met-1–Phe-28 are Extracellular-facing. Residue Asn-5 is glycosylated (N-linked (GlcNAc...) asparagine). Residues Leu-29–Ile-49 form a helical membrane-spanning segment. Over Trp-50–His-56 the chain is Cytoplasmic. Residues Ile-57–Val-77 traverse the membrane as a helical segment. Residues Thr-78 to Cys-97 are Extracellular-facing. Residues Cys-97 and Cys-179 are joined by a disulfide bond. The helical transmembrane segment at Met-98–Met-118 threads the bilayer. At Ala-119–Arg-143 the chain is on the cytoplasmic side. The helical transmembrane segment at Leu-144–Phe-164 threads the bilayer. The Extracellular segment spans residues Arg-165–Ser-193. The chain crosses the membrane as a helical span at residues Ile-194–Val-214. The Cytoplasmic segment spans residues Leu-215–Ser-239. The helical transmembrane segment at Thr-240 to Leu-260 threads the bilayer. The Extracellular segment spans residues Arg-261–Asp-271. The chain crosses the membrane as a helical span at residues Met-272 to Leu-292. Topologically, residues Arg-293 to Val-309 are cytoplasmic.

The protein belongs to the G-protein coupled receptor 1 family.

The protein resides in the cell membrane. In terms of biological role, odorant receptor. The sequence is that of Olfactory receptor 5H2 (OR5H2) from Homo sapiens (Human).